The chain runs to 134 residues: Small ribosomal subunit protein uS9 (134 aa).

A disordered region spans residues glutamate 97–arginine 134. A compositionally biased stretch (basic residues) spans lysine 115 to arginine 134.

This sequence belongs to the universal ribosomal protein uS9 family.

In Chlamydia pneumoniae (Chlamydophila pneumoniae), this protein is Small ribosomal subunit protein uS9 (rpsI).